A 312-amino-acid polypeptide reads, in one-letter code: Malate dehydrogenase (312 aa).

NAD(+)-binding positions include 7–13 (GAAGGIG) and aspartate 34. Positions 81 and 87 each coordinate substrate. NAD(+) is bound by residues asparagine 94 and 117 to 119 (ITN). Residues asparagine 119 and arginine 153 each contribute to the substrate site. The active-site Proton acceptor is the histidine 177. Residue methionine 227 participates in NAD(+) binding.

This sequence belongs to the LDH/MDH superfamily. MDH type 1 family. Homodimer.

The catalysed reaction is (S)-malate + NAD(+) = oxaloacetate + NADH + H(+). In terms of biological role, catalyzes the reversible oxidation of malate to oxaloacetate. The polypeptide is Malate dehydrogenase (Escherichia coli (strain 55989 / EAEC)).